Here is a 486-residue protein sequence, read N- to C-terminus: MHKQGKYQFWFITGSQPLYGQEALDEVAAHSKAMVERLKEKLPEELVLKPVASSPERILELFRAANGDNNCAGIITWMHTFSPAKMWIAGLNELNKPMLHFHTQYNRDIPWGDIDMDFMNLNQSAHGDREFGFMVSRMNIDRKVVAGHWQDARVMKRIGDWMKTVNAYQESKQLKIARFGDNMREVAVTEGDKVEAQIKLGWSVSGFGIGDLVEVINSVSTEEVNALMDEYRSLYTFHRDANIAAVEEQARIEIGIERFLQQGDFRAFSTTFEDLHGMKQLPGLAVQRLMAKGYGFAGEGDWKTAALLRVLKVLAGNVGTSFMEDYTNHLEPGQEMILGSHMLEVCPTISAQKPEIVVAPLSMGNREDPARLVFKGKAGRALNAALIDMGSRFRLVANEVEAVENPHDMPKLPVASVLWKPLPSFSEATEAWIYAGGAHHTVFSYEISKEQLADWASLMGIECIVIDDQSNVGQVRKELFWNRRAY.

Mn(2+) is bound by residues glutamate 299, glutamate 324, histidine 341, and histidine 440.

This sequence belongs to the arabinose isomerase family. Mn(2+) serves as cofactor.

The catalysed reaction is beta-L-arabinopyranose = L-ribulose. It participates in carbohydrate degradation; L-arabinose degradation via L-ribulose; D-xylulose 5-phosphate from L-arabinose (bacterial route): step 1/3. In terms of biological role, catalyzes the conversion of L-arabinose to L-ribulose. The polypeptide is L-arabinose isomerase (Shouchella clausii (strain KSM-K16) (Alkalihalobacillus clausii)).